The chain runs to 287 residues: Flagellin (287 aa).

Belongs to the bacterial flagellin family.

The protein resides in the secreted. It localises to the bacterial flagellum. Flagellin is the subunit protein which polymerizes to form the filaments of bacterial flagella. The polypeptide is Flagellin (flaA) (Listeria monocytogenes serovar 1/2a (strain ATCC BAA-679 / EGD-e)).